The sequence spans 34 residues: uncharacterized protein (34 aa).

The span at 1–12 (MFSHFEVSENRP) shows a compositional bias: basic and acidic residues. Residues 1 to 21 (MFSHFEVSENRPRKQPRRKRI) are disordered.

This is an uncharacterized protein from Saccharomyces cerevisiae (strain ATCC 204508 / S288c) (Baker's yeast).